The sequence spans 141 residues: MVTVTLISKPQARVGGNFRVIKIPEECYRCKLYGICMGRLRPGRAYRITEVRPLKYPSPYKCLLNGDEMVPVVVEEENLILPIKLPYIIEGSITSFDKSWCICHPCPSEEALPSRVKIIKVIDRRQCGSGWFFLVEAKPLD.

Belongs to the UPF0179 family.

The protein is UPF0179 protein Cmaq_1008 of Caldivirga maquilingensis (strain ATCC 700844 / DSM 13496 / JCM 10307 / IC-167).